The following is a 528-amino-acid chain: MARCRHHSGYVADDEASHSMCSARVQLPKKPLVPEMGPASKLGHVPHPPSTCGSSALQNQRRNKRHPQPFSHFLDFLTESHVLDSLETVVEKATERMAAMKTEAGVPLVEVQDPVEVPSGGRRAHARPSLSTVHRHRVRPTLCTGHPNNYPSSSSSMSDSHSSLMAGWLGSHSRDSDLGAQGLGSLPPVKDRLLLEKNLKRLLQLERKGKGLSQSCSKRDSLLWDLLGSQTSFQWTQEQPLSWFSELLGSSSGVPEASEPRPGEQEPICKREFNKEIKSLLSQLESLDLPGYCPLREPHRTLNFLADHRLFPALQSVVNQAVDKLRGARCRDGRPLFPTSLEPPSELQVQRNLPPLGSEPAKPTNSGQPHPTVSSPKTPQRKHKDRGGSPSMSSAQVATRFKLKVTPMEKPDIPSPSLHSREKEPDSDPKLQNPPVSLSSRQRAQPWRGLHLTLPAPGIVVEVACGQGHLRVVTPPLACPYPHSSCYLLPELSPVTSSSPSSLCPEVTSSKVGPDMSLQEKGSLTHHS.

Residues 43-68 (GHVPHPPSTCGSSALQNQRRNKRHPQ) are disordered. Positions 51–60 (TCGSSALQNQ) are enriched in polar residues. Residues 81-104 (HVLDSLETVVEKATERMAAMKTEA) adopt a coiled-coil conformation. 2 disordered regions span residues 335–444 (PLFP…RQRA) and 497–528 (SSSP…THHS). The segment covering 363 to 378 (PTNSGQPHPTVSSPKT) has biased composition (polar residues). Serine 389 bears the Phosphoserine mark. Positions 419-429 (HSREKEPDSDP) are enriched in basic and acidic residues. Residues 434–443 (PPVSLSSRQR) are compositionally biased toward polar residues. Residues 497–510 (SSSPSSLCPEVTSS) show a composition bias toward low complexity.

It localises to the cytoplasm. The protein resides in the cytoskeleton. Its subcellular location is the microtubule organizing center. It is found in the centrosome. The polypeptide is Coiled-coil domain-containing protein 116 (CCDC116) (Macaca fascicularis (Crab-eating macaque)).